A 1159-amino-acid chain; its full sequence is CRISPR-associated endoribonuclease Cas13a (1159 aa).

The tract at residues 1–11 (MKVTKVGGISH) is binds crRNA repeat and spacer. Residues 1-170 (MKVTKVGGIS…NNIEKVEGKS (170 aa)) are NTD. Binds crRNA repeat stretches follow at residues 139-151 (NKIN…FEKN), 172-176 (RNIIY), 224-233 (REFYHEIIGR), 271-276 (QVFYKY), 294-297 (HFVE), and 301-305 (SQLLK). Positions 171 to 360 (KRNIIYDYYR…YNYYLQDGEI (190 aa)) are helical-1. The tract at residues 319 to 328 (KIKRIFEYQN) is binds crRNA processing site. Binds crRNA repeat stretches follow at residues 336 to 340 (KLLNK) and 371 to 378 (QNEAFLRN). Positions 361 to 508 (ATSDFIARNR…SKKMFQNEIN (148 aa)) are HEPN-like fold 1-I. Residues Arg-472 and His-477 each act as for target RNA cleavage in the active site. The helical-2 stretch occupies residues 509–751 (EKKLKLKIFR…EFLREIKLGN (243 aa)). Positions 519 to 522 (QLNS) are binds target RNA. A binds crRNA spacer region spans residues 547 to 558 (NKNIPFVPSFTK). The tract at residues 590–597 (DAQIYLLK) is binds target RNA. Residues 718–722 (KQEFD) are binds crRNA spacer. The HEPN-like fold 1-II stretch occupies residues 752 to 813 (ILKYTERLNM…NLDNNRVTED (62 aa)). Residues 780-783 (SLEK) are binds crRNA repeat. Residues 804-810 (NLDNNRV) are binds crRNA spacer and target RNA. A linker region spans residues 814–946 (FELEADEIGK…EYTHLKNKVE (133 aa)). Binds crRNA spacer regions lie at residues 845-857 (KIYF…IKHR) and 938-942 (YTHLK). Residues 880-946 (YKISIEELKK…EYTHLKNKVE (67 aa)) are a coiled coil. The tract at residues 947 to 1159 (FNELNLLQGL…YKMEEKKSEN (213 aa)) is HEPN-like fold 2. The binds crRNA repeat stretch occupies residues 962-963 (HR). The interval 995-998 (FENK) is binds 3'-end of target RNA, in adjacent protein. Catalysis depends on for target RNA cleavage residues Arg-1048 and His-1053. 2 binds crRNA processing site regions span residues 1072 to 1082 (RKLLSYDRKLK) and 1104 to 1108 (IGADK).

It belongs to the CRISPR-associated endoribonuclease Cas13a family. In terms of assembly, crystals show the 3'-end of target RNA interacting with an adjacent protein molecule, and mutagenesis of those amino acid residues decreases target RNA cleavage, but it is not clear if this is physiological. A divalent metal cation serves as cofactor.

With respect to regulation, target RNA acts as an activator for non-specific ssRNA cleavage; the target RNA and complementary crRNA must both be at least 20 nucleotides long to activate the HEPN-like catalytic pocket for RNase activity. Its function is as follows. CRISPR (clustered regularly interspaced short palindromic repeat), is an adaptive immune system that provides protection against mobile genetic elements (viruses, transposable elements and conjugative plasmids). CRISPR clusters contain sequences complementary to antecedent mobile elements (spacer sequences) and target invading nucleic acids. Unlike many single-component effectors, this CRISPR-Cas system targets RNA. CRISPR clusters are transcribed from pre-CRISPR RNA (crRNA) and processed into crRNA by this protein. pre-crRNA processing yields a 5'-OH and probably a 2',3'-cyclic phosphate. Also cleaves pre-crRNA from several other type VI-A CRISPR systems. Cleaves linear target ssRNA in a crRNA-dependent fashion, preferentially before U residues. Cleavage of target ssRNA is about 80-fold faster than pre-crRNA processing and uses a different active site. Binding a viable target RNA target activates this protein for non-specific RNA degradation in vitro (called collateral RNA degradation). Activation occurs with 10 fM target RNA. crRNA maturation is not essential for activation of RNA degradation, but lack of mature crRNA (due to mutagenesis) decreases activation levels. This system has a 3' protospacer flanking site in the target RNA (PFS), which is C and unavailable to base pair with crRNA (PFS is equivalent to PAM, the protospacer adjacent motif). This Leptotrichia buccalis (strain ATCC 14201 / DSM 1135 / JCM 12969 / NCTC 10249 / C-1013-b) protein is CRISPR-associated endoribonuclease Cas13a.